The primary structure comprises 131 residues: Global transcriptional regulator Spx (131 aa).

A disulfide bridge connects residues cysteine 10 and cysteine 13.

This sequence belongs to the ArsC family. Spx subfamily. Interacts with the C-terminal domain of the alpha subunit of the RNAP.

The protein localises to the cytoplasm. In terms of biological role, global transcriptional regulator that plays a key role in stress response and exerts either positive or negative regulation of genes. Acts by interacting with the C-terminal domain of the alpha subunit of the RNA polymerase (RNAP). This interaction can enhance binding of RNAP to the promoter region of target genes and stimulate their transcription, or block interaction of RNAP with activator. This chain is Global transcriptional regulator Spx, found in Staphylococcus haemolyticus (strain JCSC1435).